We begin with the raw amino-acid sequence, 428 residues long: D-amino acid dehydrogenase (428 aa).

FAD is bound at residue 3-17; it reads VVILGSGVVGVASAY.

It belongs to the DadA oxidoreductase family. Requires FAD as cofactor.

The catalysed reaction is a D-alpha-amino acid + A + H2O = a 2-oxocarboxylate + AH2 + NH4(+). It functions in the pathway amino-acid degradation; D-alanine degradation; NH(3) and pyruvate from D-alanine: step 1/1. Functionally, oxidative deamination of D-amino acids. This is D-amino acid dehydrogenase from Burkholderia lata (strain ATCC 17760 / DSM 23089 / LMG 22485 / NCIMB 9086 / R18194 / 383).